The primary structure comprises 335 residues: Tetraacyldisaccharide 4'-kinase (335 aa).

58–65 (TAGGSGKT) lines the ATP pocket.

Belongs to the LpxK family.

It carries out the reaction a lipid A disaccharide + ATP = a lipid IVA + ADP + H(+). It participates in glycolipid biosynthesis; lipid IV(A) biosynthesis; lipid IV(A) from (3R)-3-hydroxytetradecanoyl-[acyl-carrier-protein] and UDP-N-acetyl-alpha-D-glucosamine: step 6/6. Transfers the gamma-phosphate of ATP to the 4'-position of a tetraacyldisaccharide 1-phosphate intermediate (termed DS-1-P) to form tetraacyldisaccharide 1,4'-bis-phosphate (lipid IVA). The polypeptide is Tetraacyldisaccharide 4'-kinase (Shewanella frigidimarina (strain NCIMB 400)).